We begin with the raw amino-acid sequence, 181 residues long: Ribosome maturation factor RimM (181 aa).

A PRC barrel domain is found at 99–172 (EDEFYQVDLI…FLIVDPMAAG (74 aa)).

This sequence belongs to the RimM family. In terms of assembly, binds ribosomal protein uS19.

It localises to the cytoplasm. In terms of biological role, an accessory protein needed during the final step in the assembly of 30S ribosomal subunit, possibly for assembly of the head region. Essential for efficient processing of 16S rRNA. May be needed both before and after RbfA during the maturation of 16S rRNA. It has affinity for free ribosomal 30S subunits but not for 70S ribosomes. The sequence is that of Ribosome maturation factor RimM from Bartonella tribocorum (strain CIP 105476 / IBS 506).